Here is a 697-residue protein sequence, read N- to C-terminus: Phosphatase and actin regulator 4-B (697 aa).

One copy of the RPEL 1 repeat lies at 42–67 (EVLERKISMRKPREELVKRGLIVDVP). 2 disordered regions span residues 63-381 (IVDV…LTLA) and 450-569 (LKVP…SKDE). Over residues 189 to 202 (HVPEKTSEKYRPKS) the composition is skewed to basic and acidic residues. 2 stretches are compositionally biased toward pro residues: residues 317–326 (PSPPLPPKRA) and 370–380 (APNPPVPPLTL). Acidic residues-rich tracts occupy residues 454–469 (DDDD…DESL), 501–514 (QEED…DTDS), and 522–532 (EEDEDEEEEET). RPEL repeat units lie at residues 579–604 (TQLN…QKNE) and 616–641 (RRLT…RFNE).

The protein belongs to the phosphatase and actin regulator family. In terms of assembly, binds ppp1ca and actin.

The protein localises to the cytoplasm. It localises to the cell projection. Its subcellular location is the lamellipodium. Its function is as follows. Regulator of protein phosphatase 1 (PP1) required for neural tube and optic fissure closure, and enteric neural crest cell (ENCCs) migration during development. Acts as an activator of PP1. During neural tube closure, localizes to the ventral neural tube and activates PP1, leading to down-regulate cell proliferation within cranial neural tissue and the neural retina. Also acts as a regulator of migration of enteric neural crest cells (ENCCs) by activating PP1, leading to repression of the integrin signaling through the rho/rock pathway. The chain is Phosphatase and actin regulator 4-B (phactr4-b) from Xenopus laevis (African clawed frog).